The following is a 909-amino-acid chain: Tubulin polyglutamylase TTLL7 (909 aa).

Residues 40–392 enclose the TTL domain; sequence NGAITANVVG…RASDKKKNLA (353 aa). ATP-binding positions include Lys-162, 168-169, 190-193, and 203-205; these read MG, QEYL, and KFD. Arg-229 is a binding site for L-glutamate. An ATP-binding site is contributed by 251-252; it reads TN. L-glutamate contacts are provided by Tyr-253, Ser-254, and Lys-273. Asp-338, Glu-351, and Asn-353 together coordinate Mg(2+). Lys-369 provides a ligand contact to L-glutamate. The segment at 390–452 is c-MTBD region; the sequence is NLAKQKAEAQ…ISREEYENRH (63 aa). 2 disordered regions span residues 517–580 and 603–688; these read DEKL…KVSY and KAAR…PSIS. Over residues 518–531 the composition is skewed to basic and acidic residues; it reads EKLSGKPTRPKEPR. Polar residues predominate over residues 532–542; sequence TLSSMPESTQT. The segment covering 548–562 has biased composition (low complexity); sequence NYSSHSSSNSTGSSS. Basic and acidic residues predominate over residues 571-580; the sequence is KEGKEKKVSY. Residues 604 to 625 are compositionally biased toward low complexity; that stretch reads AARPFSNSSSPSSAASMRRSVS. Polar residues predominate over residues 626-657; the sequence is CPRSITALNTQSPTTDQRPFSSRISSTITRPL. Positions 658–673 are enriched in low complexity; it reads SGNRTNSLNRSSSSNR. The segment covering 674-688 has biased composition (polar residues); sequence VPQSGTSGSVYPSIS.

Belongs to the tubulin--tyrosine ligase family. Interacts with both alpha- and beta-tubulin (via C-terminal tubulin tails). The cofactor is Mg(2+).

It localises to the cell projection. It is found in the cilium. The protein resides in the cytoplasm. Its subcellular location is the cytoskeleton. The protein localises to the cilium basal body. It localises to the dendrite. It is found in the perikaryon. It carries out the reaction L-glutamyl-[protein] + L-glutamate + ATP = gamma-L-glutamyl-L-glutamyl-[protein] + ADP + phosphate + H(+). The catalysed reaction is (L-glutamyl)(n)-gamma-L-glutamyl-L-glutamyl-[protein] + L-glutamate + ATP = (L-glutamyl)(n+1)-gamma-L-glutamyl-L-glutamyl-[protein] + ADP + phosphate + H(+). In terms of biological role, polyglutamylase which modifies tubulin, generating polyglutamate side chains of variable lengths on the gamma-carboxyl group of specific glutamate residues within the C-terminal tail of tubulin. Mediates both ATP-dependent initiation and elongation steps of the polyglutamylation reaction. Preferentially modifies the beta-tubulin tail over an alpha-tail. Competes with monoglycylase TTLL3 for modification site on beta-tubulin substrate, thereby creating an anticorrelation between glycylation and glutamylation reactions. The polypeptide is Tubulin polyglutamylase TTLL7 (Xenopus tropicalis (Western clawed frog)).